The following is an 811-amino-acid chain: MSAIARAAARVRQQNTTPLQRPLLLQRKPVLTHTLALHASPLKPSLATSITSPNFQQSFQRRWASASATAEEGAKEEVWPQRKLPELTETDKLRLRRQRNVGISAHIDSGKTTLTERVLYYTGRIRDIHEVRGRDAVGAKMDSMELEREKGITIQSAATFADWVAPKPPTELKEGETVGNTDKQKFAINIIDTPGHVDFTIEVERALRVLDGAVLVLCAVSGVQSQTITVDRQMRRYNVPRLAFINKMDRAGSNPFRVIGQLRGKLKMNAAAVQVPIGSESDFAGVVDIVRMKAIYNEGVKGNQIVETDEIPESVRALAEEKRAELIEQLSEADETLCDLFLDEAPITPTDIAQALQRATTSLRFTPVFMGSAIKNTGVQPLLDGVCAYLPNPSEVQNQAMDATLPAHAPTIPLVPATDAPLVGLAFKLEEGRYGQLTYMRVYQGELKRGSMIYNARTGKRVKVPRLVRMHADEMEDVDAVVAGEICAMFGVECSSGDTFTDGSSTYTMTSMFVPEPVISLSIRPEGNETPNFSRALNRFQKEDPTFRVHVDSESQETIISGMGELHLDIYVERMKREYNVACVTGKPRVAFRETITEAAKFNYTHKKQSGGSGQFGRVIGSIEPMETDPDTGKDTAFENRIIGGNIPNQFIPAIQKGFQEALDRGLITGHPITGCKFVLDDGSAHAVDSNELAFRLAAIGAFREAFNKARPVVLEPVMTVEIVAPIEFQGNVIGAINQRKGTIVDTEVRDDEFTLTAEVALNDMFGYSSQLRGMTQGKGEFSMEYKNHQPVLPNIQKEMAEAFRKKQLSK.

Residues 1–64 (MSAIARAAAR…FQQSFQRRWA (64 aa)) constitute a mitochondrion transit peptide. Residues 96–394 (RRQRNVGISA…GVCAYLPNPS (299 aa)) form the tr-type G domain. Residues 105-112 (AHIDSGKT), 192-196 (DTPGH), and 246-249 (NKMD) contribute to the GTP site.

It belongs to the TRAFAC class translation factor GTPase superfamily. Classic translation factor GTPase family. EF-G/EF-2 subfamily.

The protein localises to the mitochondrion. It participates in protein biosynthesis; polypeptide chain elongation. Its function is as follows. Mitochondrial GTPase that catalyzes the GTP-dependent ribosomal translocation step during translation elongation. During this step, the ribosome changes from the pre-translocational (PRE) to the post-translocational (POST) state as the newly formed A-site-bound peptidyl-tRNA and P-site-bound deacylated tRNA move to the P and E sites, respectively. Catalyzes the coordinated movement of the two tRNA molecules, the mRNA and conformational changes in the ribosome. The polypeptide is Elongation factor G, mitochondrial (Cryptococcus neoformans var. neoformans serotype D (strain JEC21 / ATCC MYA-565) (Filobasidiella neoformans)).